A 98-amino-acid polypeptide reads, in one-letter code: Protein translation factor SUI1 homolog (98 aa).

This sequence belongs to the SUI1 family.

The chain is Protein translation factor SUI1 homolog from Pyrococcus abyssi (strain GE5 / Orsay).